The sequence spans 428 residues: GTPase Obg (428 aa).

The region spanning 1–158 (MFVDQVKIYV…RDVILELKVL (158 aa)) is the Obg domain. In terms of domain architecture, OBG-type G spans 159-329 (ADVGLVGFPS…LLFEVANLIE (171 aa)). GTP contacts are provided by residues 165–172 (GFPSVGKS), 190–194 (FTTIV), 212–215 (DLPG), 282–285 (NKMD), and 310–312 (SAV). Positions 172 and 192 each coordinate Mg(2+). The OCT domain maps to 350–428 (KFDTEGVKFE…ILEYEFEFID (79 aa)).

It belongs to the TRAFAC class OBG-HflX-like GTPase superfamily. OBG GTPase family. As to quaternary structure, monomer. Mg(2+) is required as a cofactor.

It is found in the cytoplasm. Functionally, an essential GTPase which binds GTP, GDP and possibly (p)ppGpp with moderate affinity, with high nucleotide exchange rates and a fairly low GTP hydrolysis rate. Plays a role in control of the cell cycle, stress response, ribosome biogenesis and in those bacteria that undergo differentiation, in morphogenesis control. The chain is GTPase Obg from Bacillus cereus (strain ATCC 14579 / DSM 31 / CCUG 7414 / JCM 2152 / NBRC 15305 / NCIMB 9373 / NCTC 2599 / NRRL B-3711).